We begin with the raw amino-acid sequence, 326 residues long: ATP-dependent 6-phosphofructokinase (326 aa).

Gly-12 is an ATP binding site. 22–26 (RAIIK) contributes to the ADP binding site. Residues 73 to 74 (RF) and 103 to 106 (GDGS) contribute to the ATP site. Mg(2+) is bound at residue Asp-104. 126–128 (TID) is a substrate binding site. The Proton acceptor role is filled by Asp-128. Arg-155 provides a ligand contact to ADP. Residues Arg-163 and 170-172 (MGH) contribute to the substrate site. Residues 186–188 (GSE), Lys-212, and 215–217 (KRS) contribute to the ADP site. Residues Glu-224, Lys-246, and 252–255 (HIQR) each bind substrate.

This sequence belongs to the phosphofructokinase type A (PFKA) family. ATP-dependent PFK group I subfamily. Prokaryotic clade 'B1' sub-subfamily. Homotetramer. Requires Mg(2+) as cofactor.

It localises to the cytoplasm. It carries out the reaction beta-D-fructose 6-phosphate + ATP = beta-D-fructose 1,6-bisphosphate + ADP + H(+). It functions in the pathway carbohydrate degradation; glycolysis; D-glyceraldehyde 3-phosphate and glycerone phosphate from D-glucose: step 3/4. With respect to regulation, allosterically activated by ADP and other diphosphonucleosides, and allosterically inhibited by phosphoenolpyruvate. Catalyzes the phosphorylation of D-fructose 6-phosphate to fructose 1,6-bisphosphate by ATP, the first committing step of glycolysis. In Mycoplasmopsis pulmonis (strain UAB CTIP) (Mycoplasma pulmonis), this protein is ATP-dependent 6-phosphofructokinase.